Reading from the N-terminus, the 1461-residue chain is Neogenin (1461 aa).

The signal sequence occupies residues 1-33 (MAAERGARRLLSTPSFWLYCLLLLGRRAPGAAA). Topologically, residues 34-1105 (ARSGSAPQSP…PTSPLDSNML (1072 aa)) are extracellular. Ig-like C2-type domains are found at residues 52–141 (PFYF…TIIS), 152–238 (PRFT…VELK), 243–336 (PEVI…AELT), and 341–426 (PEFL…AQLI). N-linked (GlcNAc...) asparagine glycosylation occurs at asparagine 73. Disulfide bonds link cysteine 74-cysteine 129, cysteine 173-cysteine 221, and cysteine 270-cysteine 320. Asparagine 210 carries an N-linked (GlcNAc...) asparagine glycan. A glycan (N-linked (GlcNAc...) asparagine) is linked at asparagine 326. Cysteine 362 and cysteine 410 are oxidised to a cystine. Fibronectin type-III domains are found at residues 441-535 (APRD…TQPE), 541-631 (PAPN…TLSD), 636-731 (APQN…TFES), 741-831 (VPSS…RPHT), 856-952 (PPVG…TFEL), and 957-1054 (PPKD…TPKA). Asparagine 470 and asparagine 489 each carry an N-linked (GlcNAc...) asparagine glycan. N-linked (GlcNAc...) asparagine glycosylation is found at asparagine 639 and asparagine 715. Asparagine 909 carries N-linked (GlcNAc...) asparagine glycosylation. The disordered stretch occupies residues 1041–1097 (GPMSEAVQFRTPKADSSDKMPNDQASGSGGKGSRLPDLGSDYKPPMSGSNSPHGSPT). Basic and acidic residues predominate over residues 1052–1061 (PKADSSDKMP). Over residues 1087 to 1097 (SGSNSPHGSPT) the composition is skewed to polar residues. Residues 1106 to 1126 (LVIIVSVGVITIVVVVIIAVF) form a helical membrane-spanning segment. The Cytoplasmic segment spans residues 1127-1461 (CTRRTTSHQK…MKDLNAITTA (335 aa)). 4 disordered regions span residues 1138–1160 (KRAA…DVKP), 1174–1206 (PIDK…SMDS), 1235–1276 (PKMM…PARS), and 1289–1381 (TSMS…ALPS). Phosphoserine is present on residues serine 1178 and serine 1194. The segment covering 1191-1206 (PRNSQDITPVDNSMDS) has biased composition (polar residues). Threonine 1198 carries the phosphothreonine modification. Polar residues-rich tracts occupy residues 1289–1322 (TSMS…TCCT) and 1330–1349 (ATSS…QSLP). Residues 1366-1375 (AIPPPGPPTY) show a composition bias toward pro residues. Phosphoserine is present on serine 1401. Threonine 1404 is modified (phosphothreonine). Phosphoserine occurs at positions 1432, 1434, and 1435.

It belongs to the immunoglobulin superfamily. DCC family. As to quaternary structure, interacts with MYO10. Interacts with RGMA and RGMB. Interacts with BMP2, BMP4, BMP6, and BMP7. In terms of tissue distribution, widely expressed and also in cancer cell lines.

The protein resides in the cell membrane. In terms of biological role, multi-functional cell surface receptor regulating cell adhesion in many diverse developmental processes, including neural tube and mammary gland formation, myogenesis and angiogenesis. Receptor for members of the BMP, netrin, and repulsive guidance molecule (RGM) families. Netrin-Neogenin interactions result in a chemoattractive axon guidance response and cell-cell adhesion, the interaction between NEO1/Neogenin and RGMa and RGMb induces a chemorepulsive response. This is Neogenin (NEO1) from Homo sapiens (Human).